A 1604-amino-acid chain; its full sequence is MGAKESRIGFLSYEEALRRVTDVELKRLKDAFKRTCGLSYYMGQHCFIREVLGDGVPPKVAEVIYCSFGGTSKGLHFNNLIVGLVLLTRGKDEEKAKYIFSLFSSESGNYVIREEMERMLHVVDGKVPDTLRKCFSEGEKVNYEKFRNWLFLNKDAFTFSRWLLSGGVYVTLTDDSDTPTFYQTLAGVTHLEESDIIDLEKRYWLLKAQSRTGRFDLETFGPLVSPPIRPSLSEGLFNAFDENRDNHIDFKEISCGLSACCRGPLAERQKFCFKVFDVDRDGVLSRVELRDMVVALLEVWKDNRTDDIPELHMDLSDIVEGILNAHDTTKMGHLTLEDYQIWSVKNVLANEFLNLLFQVCHIVLGLRPATPEEEGQIIRGWLERESRYGLQAGHNWFIISMQWWQQWKEYVKYDANPVVIEPSSVLNGGKYSFGTAAHPMEQVEDRIGSSLSYVNTTEEKFSDNISTASEASETAGSGFLYSATPGADVCFARQHNTSDNNNQCLLGANGNILLHLNPQKPGAIDNQPLVTQEPVKATSLTLEGGRLKRTPQLIHGRDYEMVPEPVWRALYHWYGANLALPRPVIKNSKTDIPELELFPRYLLFLRQQPATRTQQSNIWVNMGNVPSPNAPLKRVLAYTGCFSRMQTIKEIHEYLSQRLRIKEEDMRLWLYNSENYLTLLDDEDHKLEYLKIQDEQHLVIEVRNKDMSWPEEMSFIANSSKIDRHKVPTEKGATGLSNLGNTCFMNSSIQCVSNTQPLTQYFISGRHLYELNRTNPIGMKGHMAKCYGDLVQELWSGTQKNVAPLKLRWTIAKYAPRFNGFQQQDSQELLAFLLDGLHEDLNRVHEKPYVELKDSDGRPDWEVAAEAWDNHLRRNRSIVVDLFHGQLRSQVKCKTCGHISVRFDPFNFLSLPLPMDSYMHLEITVIKLDGTTPVRYGLRLNMDEKYTGLKKQLSDLCGLNSEQILLAEVHGSNIKNFPQDNQKVRLSVSGFLCAFEIPVPVSPISASSPTQTDFSSSPSTNEMFTLTTNGDLPRPIFIPNGMPNTVVPCGTEKNFTNGMVNGHMPSLPDSPFTGYIIAVHRKMMRTELYFLSSQKNRPSLFGMPLIVPCTVHTRKKDLYDAVWIQVSRLASPLPPQEASNHAQDCDDSMGYQYPFTLRVVQKDGNSCAWCPWYRFCRGCKIDCGEDRAFIGNAYIAVDWDPTALHLRYQTSQERVVDEHESVEQSRRAQAEPINLDSCLRAFTSEEELGENEMYYCSKCKTHCLATKKLDLWRLPPILIIHLKRFQFVNGRWIKSQKIVKFPRESFDPSAFLVPRDPALCQHKPLTPQGDELSEPRILAREVKKVDAQSSAGEEDVLLSKSPSSLSANIISSPKGSPSSSRKSGTSCPSSKNSSPNSSPRTLGRSKGRLRLPQIGSKNKLSSSKENLDASKENGAGQICELADALSRGHVLGGSQPELVTPQDHEVALANGFLYEHEACGNGYSNGQLGNHSEEDSTDDQREDTRIKPIYNLYAISCHSGILGGGHYVTYAKNPNCKWYCYNDSSCKELHPDEIDTDSAYILFYEQQGIDYAQFLPKTDGKKMADTSSMDEDFESDYKKYCVLQ.

3 EF-hand domains span residues 91–126 (KDEE…VDGK), 228–263 (IRPS…CCRG), and 264–299 (PLAE…LLEV). Ca(2+) contacts are provided by D241, N243, D245, H247, E252, D277, D279, D281, and E288. Residues 369–585 (ATPEEEGQII…ANLALPRPVI (217 aa)) enclose the DUSP domain. The region spanning 734–1567 (TGLSNLGNTC…SAYILFYEQQ (834 aa)) is the USP domain. The Nucleophile role is filled by C743. Y1173 bears the Phosphotyrosine mark. Disordered stretches follow at residues 1343-1362 (KKVD…SKSP) and 1367-1431 (ANII…DASK). A phosphoserine mark is found at S1350, S1372, S1376, and S1454. A compositionally biased stretch (low complexity) spans 1367–1399 (ANIISSPKGSPSSSRKSGTSCPSSKNSSPNSSP). The Proton acceptor role is filled by H1526. S1588 is modified (phosphoserine). The residue at position 1601 (C1601) is a Cysteine methyl ester. Residue C1601 is the site of S-farnesyl cysteine attachment. A propeptide spans 1602–1604 (VLQ) (removed in mature form).

The protein belongs to the peptidase C19 family.

It is found in the golgi apparatus membrane. The enzyme catalyses Thiol-dependent hydrolysis of ester, thioester, amide, peptide and isopeptide bonds formed by the C-terminal Gly of ubiquitin (a 76-residue protein attached to proteins as an intracellular targeting signal).. Deubiquitinase that can remove conjugated ubiquitin from target proteins, such as RAB7A and LAMTOR1. Acts as a positive regulator of the mTORC1 signaling by mediating deubiquitination of LAMTOR1, thereby promoting the association between LAMTOR1 and the lysosomal V-ATPase complex and subsequent activation of the mTORC1 complex. This Homo sapiens (Human) protein is Ubiquitin carboxyl-terminal hydrolase 32 (USP32).